We begin with the raw amino-acid sequence, 172 residues long: UBA-like domain-containing protein 2 (172 aa).

The segment covering Pro118–Ser130 has biased composition (pro residues). Residues Pro118 to Arg172 are disordered. Positions His135–His145 are enriched in basic residues.

It belongs to the UBALD family.

This Danio rerio (Zebrafish) protein is UBA-like domain-containing protein 2 (ubald2).